A 384-amino-acid polypeptide reads, in one-letter code: Cytochrome b (384 aa).

The next 4 helical transmembrane spans lie at 32 to 52, 75 to 96, 111 to 131, and 176 to 196; these read FGSL…FLSM, FLLR…YFHI, WRVG…GYVL, and FFSL…VHLI. 2 residues coordinate heme b: H81 and H95. The heme b site is built by H180 and H194. H199 serves as a coordination point for a ubiquinone. Transmembrane regions (helical) follow at residues 224 to 244, 286 to 306, 318 to 338, and 345 to 366; these read SKDW…VYLM, FGGV…PLLH, FGRM…WIGS, and FIII…LIPL.

This sequence belongs to the cytochrome b family. The main subunits of complex b-c1 are: cytochrome b, cytochrome c1 and the Rieske protein. Heme b is required as a cofactor.

Its subcellular location is the mitochondrion inner membrane. Functionally, component of the ubiquinol-cytochrome c reductase complex (complex III or cytochrome b-c1 complex) that is part of the mitochondrial respiratory chain. The b-c1 complex mediates electron transfer from ubiquinol to cytochrome c. Contributes to the generation of a proton gradient across the mitochondrial membrane that is then used for ATP synthesis. The chain is Cytochrome b (MT-CYB) from Acropora tenuis (Purple tipped acropora).